We begin with the raw amino-acid sequence, 442 residues long: tRNA modification GTPase MnmE (442 aa).

The (6S)-5-formyl-5,6,7,8-tetrahydrofolate site is built by Arg-27, Glu-84, and Lys-124. Residues 221–366 (GLHVVIVGAP…LLDALQAFAE (146 aa)) enclose the TrmE-type G domain. GTP-binding positions include 231 to 236 (NAGKSS), 250 to 256 (SEEAGTT), and 275 to 278 (DTAG). Residues Ser-235 and Thr-256 each contribute to the Mg(2+) site. Lys-442 provides a ligand contact to (6S)-5-formyl-5,6,7,8-tetrahydrofolate.

It belongs to the TRAFAC class TrmE-Era-EngA-EngB-Septin-like GTPase superfamily. TrmE GTPase family. In terms of assembly, homodimer. Heterotetramer of two MnmE and two MnmG subunits. The cofactor is K(+).

The protein resides in the cytoplasm. In terms of biological role, exhibits a very high intrinsic GTPase hydrolysis rate. Involved in the addition of a carboxymethylaminomethyl (cmnm) group at the wobble position (U34) of certain tRNAs, forming tRNA-cmnm(5)s(2)U34. In Brucella abortus (strain 2308), this protein is tRNA modification GTPase MnmE.